The sequence spans 252 residues: 5-oxoprolinase subunit A (252 aa).

The protein belongs to the LamB/PxpA family. In terms of assembly, forms a complex composed of PxpA, PxpB and PxpC.

The enzyme catalyses 5-oxo-L-proline + ATP + 2 H2O = L-glutamate + ADP + phosphate + H(+). Catalyzes the cleavage of 5-oxoproline to form L-glutamate coupled to the hydrolysis of ATP to ADP and inorganic phosphate. The protein is 5-oxoprolinase subunit A of Bacillus cytotoxicus (strain DSM 22905 / CIP 110041 / 391-98 / NVH 391-98).